Here is a 964-residue protein sequence, read N- to C-terminus: Phosphoenolpyruvate carboxylase (964 aa).

At S11 the chain carries Phosphoserine. Residues H172 and K600 contribute to the active site.

This sequence belongs to the PEPCase type 1 family. As to quaternary structure, homotetramer. The cofactor is Mg(2+).

It is found in the cytoplasm. It carries out the reaction oxaloacetate + phosphate = phosphoenolpyruvate + hydrogencarbonate. Its pathway is photosynthesis; C4 acid pathway. Its activity is regulated as follows. By light-reversible phosphorylation. In terms of biological role, through the carboxylation of phosphoenolpyruvate (PEP) it forms oxaloacetate, a four-carbon dicarboxylic acid source for the tricarboxylic acid cycle. This Nicotiana tabacum (Common tobacco) protein is Phosphoenolpyruvate carboxylase (PPC).